Consider the following 211-residue polypeptide: Endoplasmic reticulum vesicle protein 25 (211 aa).

Positions 1–19 (MKSIVSVLTLLLLINAVAA) are cleaved as a signal peptide. Residues 20 to 180 (LRFVLPAKDK…TNESTNRRVK (161 aa)) are Lumenal-facing. A GOLD domain is found at 33 to 121 (PFCVRDFVKN…TKEIDLSVAI (89 aa)). Residues 181 to 201 (FFSVGITLALIALGVWQIIYL) form a helical membrane-spanning segment. The Cytoplasmic portion of the chain corresponds to 202 to 211 (RSYFRSKHII).

The protein belongs to the EMP24/GP25L family.

Its subcellular location is the endoplasmic reticulum membrane. The protein resides in the golgi apparatus membrane. Its function is as follows. Constituent of COPII-coated endoplasmic reticulum-derived transport vesicles. Required for efficient transport of a subset of secretory proteins to the Golgi. Facilitates retrograde transport from the Golgi to the endoplasmic reticulum. This is Endoplasmic reticulum vesicle protein 25 (ERV25) from Yarrowia lipolytica (strain CLIB 122 / E 150) (Yeast).